A 163-amino-acid polypeptide reads, in one-letter code: NADH-quinone oxidoreductase subunit I (163 aa).

2 consecutive 4Fe-4S ferredoxin-type domains span residues 53-83 and 94-123; these read LRRYPNGEERCIACKLCEAICPAQAITIEAG and VRYDIDMVKCIYCGFCQEACPVEAIVEGPN. The [4Fe-4S] cluster site is built by Cys63, Cys66, Cys69, Cys73, Cys103, Cys106, Cys109, and Cys113.

This sequence belongs to the complex I 23 kDa subunit family. NDH-1 is composed of 14 different subunits. Subunits NuoA, H, J, K, L, M, N constitute the membrane sector of the complex. The cofactor is [4Fe-4S] cluster.

It localises to the cell inner membrane. It catalyses the reaction a quinone + NADH + 5 H(+)(in) = a quinol + NAD(+) + 4 H(+)(out). Its function is as follows. NDH-1 shuttles electrons from NADH, via FMN and iron-sulfur (Fe-S) centers, to quinones in the respiratory chain. The immediate electron acceptor for the enzyme in this species is believed to be ubiquinone. Couples the redox reaction to proton translocation (for every two electrons transferred, four hydrogen ions are translocated across the cytoplasmic membrane), and thus conserves the redox energy in a proton gradient. The protein is NADH-quinone oxidoreductase subunit I of Bartonella quintana (strain Toulouse) (Rochalimaea quintana).